The chain runs to 182 residues: Ribulose bisphosphate carboxylase small subunit, chloroplastic (182 aa).

Residues 1–58 (MASSMISSATIATVNCSSPAQANMVAPFTGLKSASAFPVTRKANNDITSLASNGGRVQ) constitute a chloroplast transit peptide.

Belongs to the RuBisCO small chain family. As to quaternary structure, heterohexadecamer of 8 large and 8 small subunits.

Its subcellular location is the plastid. It localises to the chloroplast. RuBisCO catalyzes two reactions: the carboxylation of D-ribulose 1,5-bisphosphate, the primary event in carbon dioxide fixation, as well as the oxidative fragmentation of the pentose substrate. Both reactions occur simultaneously and in competition at the same active site. Although the small subunit is not catalytic it is essential for maximal activity. The chain is Ribulose bisphosphate carboxylase small subunit, chloroplastic from Gossypium hirsutum (Upland cotton).